A 671-amino-acid chain; its full sequence is Pescadillo homolog (671 aa).

One can recognise a BRCT domain in the interval 317–403; the sequence is KVRELFRGLT…LMLPVTGYRI (87 aa). Residues 548–584 are a coiled coil; the sequence is QALRKAQEKSRQTETSEARLQRKMSEVKRQEAATRKM. Disordered regions lie at residues 552–578 and 643–671; these read KAQEKSRQTETSEARLQRKMSEVKRQE and RRQRAEAKSKKLKERKAGNPYKKLPKWVQ.

The protein belongs to the pescadillo family.

The protein localises to the nucleus. It is found in the nucleolus. It localises to the nucleoplasm. Functionally, required for maturation of ribosomal RNAs and formation of the large ribosomal subunit. This Leishmania infantum protein is Pescadillo homolog.